We begin with the raw amino-acid sequence, 99 residues long: MMSLKLLLLVMLLLGASLQVTHAARATNVGRECCLEYFKGAIPLRRLTGWYRTSGECSKDAIVFVTIHGKSICSDPKDTRVKKTVRYLQSIMNPVPQES.

An N-terminal signal peptide occupies residues 1–23 (MMSLKLLLLVMLLLGASLQVTHA). Disulfide bonds link C33–C57 and C34–C73.

This sequence belongs to the intercrine beta (chemokine CC) family. As to expression, expressed in thymus and also in spleen, lung, lymph node, kidney, small intestine, colon and skin.

The protein localises to the secreted. Its function is as follows. Chemokine, which displays chemotactic activity for T lymphocytes, preferentially Th2 cells, but not monocytes or granulocytes. Therefore plays an important role in a wide range of inflammatory and immunological processes. Acts by binding to CCR4 at T-cell surface. Mediates GM-CSF/CSF2-driven pain and inflammation. In the brain, required to maintain the typical, highly branched morphology of hippocampal microglia under homeostatic conditions. May be important for the appropriate adaptation of microglial morphology and synaptic plasticity to acute lipopolysaccharide (LPS)-induced neuroinflammation. Plays a role in wound healing, mainly by inducing fibroblast migration into the wound. The polypeptide is C-C motif chemokine 17 (CCL17) (Felis catus (Cat)).